Here is an 892-residue protein sequence, read N- to C-terminus: Integrator complex subunit 6 (892 aa).

The region spanning 3–227 is the VWFA domain; it reads ILLFLIDTSA…QCLESLVQKV (225 aa). The Inhibitory loop motif lies at 630–637; that stretch reads MMIDEADE. 3 disordered regions span residues 665 to 692, 711 to 754, and 771 to 793; these read MSPLLRRPQTPPIITNHVLGKGPTGTQG, VGGT…AAPD, and PDHTQNCEELSPPGQEGEMEVNE.

The protein belongs to the Integrator subunit 6 family. In terms of assembly, component of the Integrator complex, composed of core subunits INTS1, INTS2, INTS3, INTS4, INTS5, INTS6, INTS7, INTS8, INTS9/RC74, INTS10, INTS11/CPSF3L, INTS12, INTS13, INTS14 and INTS15. The core complex associates with protein phosphatase 2A subunits PPP2CA and PPP2R1A, to form the Integrator-PP2A (INTAC) complex.

The protein localises to the nucleus. The protein resides in the chromosome. In terms of biological role, component of the integrator complex, a multiprotein complex that terminates RNA polymerase II (Pol II) transcription in the promoter-proximal region of genes. The integrator complex provides a quality checkpoint during transcription elongation by driving premature transcription termination of transcripts that are unfavorably configured for transcriptional elongation: the complex terminates transcription by (1) catalyzing dephosphorylation of the C-terminal domain (CTD) of Pol II subunit POLR2A/RPB1 and SUPT5H/SPT5, (2) degrading the exiting nascent RNA transcript via endonuclease activity and (3) promoting the release of Pol II from bound DNA. The integrator complex is also involved in terminating the synthesis of non-coding Pol II transcripts, such as enhancer RNAs (eRNAs), small nuclear RNAs (snRNAs), telomerase RNAs and long non-coding RNAs (lncRNAs). Within the integrator complex, INTS6 acts as a molecular adapter that promotes assembly of protein phosphatase 2A (PP2A) subunits to the integrator core complex, promoting recruitment of PP2A to transcription pause-release checkpoint. This chain is Integrator complex subunit 6 (ints6l), found in Danio rerio (Zebrafish).